The chain runs to 157 residues: MAVKIKLQRLGKIRTPHYRVIVADSRTRRSGRAIENLGIYEPKADPSVIRIDSDRVQYWLGVGAQPTEPVLALLKVTGDWQKFKGLPGAEGTLKAQPEKKSKLDLFNEALAEANNGPTLEAITEKRKAAKKAAEEAAAKEAEAEEAAEDKAEEESAE.

The span at 125–141 (KRKAAKKAAEEAAAKEA) shows a compositional bias: basic and acidic residues. Residues 125 to 157 (KRKAAKKAAEEAAAKEAEAEEAAEDKAEEESAE) are disordered. Over residues 142-157 (EAEEAAEDKAEEESAE) the composition is skewed to acidic residues.

The protein belongs to the bacterial ribosomal protein bS16 family.

This chain is Small ribosomal subunit protein bS16, found in Corynebacterium kroppenstedtii (strain DSM 44385 / JCM 11950 / CIP 105744 / CCUG 35717).